A 154-amino-acid chain; its full sequence is UPF0756 membrane protein BLi03063/BL00400 (154 aa).

Helical transmembrane passes span 8–28, 54–74, 87–107, and 117–137; these read FLIL…IIAV, WGVT…EIGF, WIAL…ITLL, and LVFG…GPLI.

The protein belongs to the UPF0756 family.

It is found in the cell membrane. The chain is UPF0756 membrane protein BLi03063/BL00400 from Bacillus licheniformis (strain ATCC 14580 / DSM 13 / JCM 2505 / CCUG 7422 / NBRC 12200 / NCIMB 9375 / NCTC 10341 / NRRL NRS-1264 / Gibson 46).